A 294-amino-acid polypeptide reads, in one-letter code: Bifunctional protein FolD (294 aa).

Residues 166-168 (GRS), S191, and I232 contribute to the NADP(+) site.

It belongs to the tetrahydrofolate dehydrogenase/cyclohydrolase family. As to quaternary structure, homodimer.

The catalysed reaction is (6R)-5,10-methylene-5,6,7,8-tetrahydrofolate + NADP(+) = (6R)-5,10-methenyltetrahydrofolate + NADPH. It catalyses the reaction (6R)-5,10-methenyltetrahydrofolate + H2O = (6R)-10-formyltetrahydrofolate + H(+). The protein operates within one-carbon metabolism; tetrahydrofolate interconversion. Functionally, catalyzes the oxidation of 5,10-methylenetetrahydrofolate to 5,10-methenyltetrahydrofolate and then the hydrolysis of 5,10-methenyltetrahydrofolate to 10-formyltetrahydrofolate. The chain is Bifunctional protein FolD from Bradyrhizobium diazoefficiens (strain JCM 10833 / BCRC 13528 / IAM 13628 / NBRC 14792 / USDA 110).